We begin with the raw amino-acid sequence, 360 residues long: Photosystem II protein D1 (360 aa).

The next 3 helical transmembrane spans lie at 30–47 (YVGWFGVLMIPCLLAAAA), 119–134 (HFLIGISAYMGRQWEL), and 143–157 (WICVAYSAPVSAAFA). Residue His-119 coordinates chlorophyll a. Tyr-127 provides a ligand contact to pheophytin a. [CaMn4O5] cluster is bound by residues Asp-171 and Glu-190. The chain crosses the membrane as a helical span at residues 198–219 (FHMAGVAGMFGGSLFSAMHGSL). Chlorophyll a is bound at residue His-199. Residues His-216 and 265–266 (SF) contribute to the a quinone site. His-216 contributes to the Fe cation binding site. His-273 provides a ligand contact to Fe cation. The chain crosses the membrane as a helical span at residues 275 to 289 (FLAVFPVVCVWLTSM). His-333, Glu-334, Asp-343, and Ala-345 together coordinate [CaMn4O5] cluster. Positions 346-360 (AAESTTVALSAPAIG) are excised as a propeptide.

The protein belongs to the reaction center PufL/M/PsbA/D family. In terms of assembly, PSII is composed of 1 copy each of membrane proteins PsbA, PsbB, PsbC, PsbD, PsbE, PsbF, PsbH, PsbI, PsbJ, PsbK, PsbL, PsbM, PsbT, PsbX, PsbY, Psb30/Ycf12, peripheral proteins PsbO, CyanoQ (PsbQ), PsbU, PsbV and a large number of cofactors. It forms dimeric complexes. The D1/D2 heterodimer binds P680, chlorophylls that are the primary electron donor of PSII, and subsequent electron acceptors. It shares a non-heme iron and each subunit binds pheophytin, quinone, additional chlorophylls, carotenoids and lipids. D1 provides most of the ligands for the Mn4-Ca-O5 cluster of the oxygen-evolving complex (OEC). There is also a Cl(-1) ion associated with D1 and D2, which is required for oxygen evolution. The PSII complex binds additional chlorophylls, carotenoids and specific lipids. serves as cofactor. Post-translationally, tyr-162 forms a radical intermediate that is referred to as redox-active TyrZ, YZ or Y-Z. C-terminally processed by CtpA; processing is essential to allow assembly of the oxygen-evolving complex and thus photosynthetic growth.

Its subcellular location is the cellular thylakoid membrane. The catalysed reaction is 2 a plastoquinone + 4 hnu + 2 H2O = 2 a plastoquinol + O2. Functionally, photosystem II (PSII) is a light-driven water:plastoquinone oxidoreductase that uses light energy to abstract electrons from H(2)O, generating O(2) and a proton gradient subsequently used for ATP formation. It consists of a core antenna complex that captures photons, and an electron transfer chain that converts photonic excitation into a charge separation. The D1/D2 (PsbA/PsbD) reaction center heterodimer binds P680, the primary electron donor of PSII as well as several subsequent electron acceptors. The protein is Photosystem II protein D1 of Prochlorococcus marinus (strain MIT 9312).